The primary structure comprises 370 residues: tRNA-specific 2-thiouridylase MnmA (370 aa).

ATP is bound by residues 8 to 15 (GMSGGVDS) and methionine 34. An interaction with target base in tRNA region spans residues 104–106 (NPD). Cysteine 109 acts as the Nucleophile in catalysis. Cysteine 109 and cysteine 202 are disulfide-bonded. Glycine 134 contributes to the ATP binding site. Residues 152–154 (KDQ) form an interaction with tRNA region. The Cysteine persulfide intermediate role is filled by cysteine 202. Residues 309–310 (RY) are interaction with tRNA.

It belongs to the MnmA/TRMU family.

The protein resides in the cytoplasm. It catalyses the reaction S-sulfanyl-L-cysteinyl-[protein] + uridine(34) in tRNA + AH2 + ATP = 2-thiouridine(34) in tRNA + L-cysteinyl-[protein] + A + AMP + diphosphate + H(+). Functionally, catalyzes the 2-thiolation of uridine at the wobble position (U34) of tRNA, leading to the formation of s(2)U34. The sequence is that of tRNA-specific 2-thiouridylase MnmA from Metamycoplasma arthritidis (strain 158L3-1) (Mycoplasma arthritidis).